A 205-amino-acid polypeptide reads, in one-letter code: Guanylate kinase (205 aa).

The Guanylate kinase-like domain maps to 5–183 (GTLYTVSAPS…ALTEFRSIVV (179 aa)). 12 to 19 (APSGAGKT) is an ATP binding site.

Belongs to the guanylate kinase family.

The protein localises to the cytoplasm. It carries out the reaction GMP + ATP = GDP + ADP. Essential for recycling GMP and indirectly, cGMP. The chain is Guanylate kinase from Saccharophagus degradans (strain 2-40 / ATCC 43961 / DSM 17024).